Reading from the N-terminus, the 186-residue chain is Peptidoglycan-recognition protein SD (186 aa).

The first 18 residues, 1–18 (MTWIGLLIVGLTAIAVQG), serve as a signal peptide directing secretion. The N-acetylmuramoyl-L-alanine amidase domain occupies 47 to 169 (AVIAHTAGGA…RQVSATMSPG (123 aa)). Cys-57 and Cys-63 are oxidised to a cystine. The N-linked (GlcNAc...) asparagine glycan is linked to Asn-181.

The protein belongs to the N-acetylmuramoyl-L-alanine amidase 2 family.

The protein resides in the secreted. Its function is as follows. Peptidoglycan-recognition protein that plays a key role in innate immunity by binding to peptidoglycans (PGN) of Gram-positive bacteria and activating the Toll pathway. Has no activity against on Gram-negative bacteria and fungi. Shows some partial redundancy with PRPGP-SA in Gram-positive bacteria recognition. May act by activating the proteolytic cleavage of Spatzle and the subsequent activation of Toll pathway. Recognizes S.aureus PGN. The chain is Peptidoglycan-recognition protein SD (PGRP-SD) from Drosophila simulans (Fruit fly).